The following is an 864-amino-acid chain: 3-O-alpha-D-mannopyranosyl-alpha-D-mannopyranose xylosylphosphotransferase (864 aa).

Pro residues predominate over residues 1–14; the sequence is MPPTALPPLRPPAQ. The disordered stretch occupies residues 1-47; sequence MPPTALPPLRPPAQPYDSYSSSLSPSSPRFHPASAPHGRRAPSPSRL. The Cytoplasmic segment spans residues 1 to 81; that stretch reads MPPTALPPLR…HIRPHLTPRT (81 aa). Residues 15 to 28 show a composition bias toward low complexity; that stretch reads PYDSYSSSLSPSSP. A helical membrane pass occupies residues 82-102; it reads LTPLLLWTLALWLVHHFLFPF. Topologically, residues 103–864 are lumenal; that stretch reads SSPLAALSRP…WDPVKDRYHD (762 aa). Asparagine 199 and asparagine 301 each carry an N-linked (GlcNAc...) asparagine glycan.

This sequence belongs to the XPT1 family. Mn(2+) is required as a cofactor.

It is found in the golgi apparatus membrane. The enzyme catalyses 3-alpha-D-mannopyranosyl-alpha-D-mannopyranose + UDP-alpha-D-xylose = 3-O-(6-O-alpha-D-xylosylphospho-alpha-D-mannopyranosyl)-alpha-D-mannopyranose + UMP + H(+). In terms of biological role, xylosylphosphotransferase that is specific for UDP-xylose as a donor and mannose as an acceptor to form a xylose-alpha-1-phosphate-6-mannose linkage. Functions in the O-glycosylation of proteins en route through the secretory pathway. The protein is 3-O-alpha-D-mannopyranosyl-alpha-D-mannopyranose xylosylphosphotransferase (XPT1) of Cryptococcus neoformans var. neoformans serotype D (strain B-3501A) (Filobasidiella neoformans).